Reading from the N-terminus, the 620-residue chain is Chaperone protein HscA homolog (620 aa).

The protein belongs to the heat shock protein 70 family.

Functionally, chaperone involved in the maturation of iron-sulfur cluster-containing proteins. Has a low intrinsic ATPase activity which is markedly stimulated by HscB. This chain is Chaperone protein HscA homolog, found in Pseudomonas putida (strain ATCC 47054 / DSM 6125 / CFBP 8728 / NCIMB 11950 / KT2440).